Reading from the N-terminus, the 463-residue chain is Elongation factor 1-alpha (463 aa).

The tr-type G domain maps to 5–242 (KTHINIVVIG…DAILPPARPT (238 aa)). The tract at residues 14–21 (GHVDSGKS) is G1. Position 14–21 (14–21 (GHVDSGKS)) interacts with GTP. Residues 70–74 (GITID) form a G2 region. Residues 91-94 (DAPG) form a G3 region. Residues 91–95 (DAPGH) and 153–156 (NKMD) contribute to the GTP site. A G4 region spans residues 153 to 156 (NKMD). The segment at 194-196 (SGW) is G5. 5-glutamyl glycerylphosphorylethanolamine is present on residues Glu-301 and Glu-374.

It belongs to the TRAFAC class translation factor GTPase superfamily. Classic translation factor GTPase family. EF-Tu/EF-1A subfamily.

Its subcellular location is the cytoplasm. Functionally, this protein promotes the GTP-dependent binding of aminoacyl-tRNA to the A-site of ribosomes during protein biosynthesis. This is Elongation factor 1-alpha from Bombyx mori (Silk moth).